The primary structure comprises 371 residues: N-acetyldiaminopimelate deacetylase (371 aa).

Asp-68 is a catalytic residue. Glu-127 acts as the Proton acceptor in catalysis.

Belongs to the peptidase M20A family. N-acetyldiaminopimelate deacetylase subfamily.

It carries out the reaction N-acetyl-(2S,6S)-2,6-diaminopimelate + H2O = (2S,6S)-2,6-diaminopimelate + acetate. Its pathway is amino-acid biosynthesis; L-lysine biosynthesis via DAP pathway; LL-2,6-diaminopimelate from (S)-tetrahydrodipicolinate (acetylase route): step 3/3. Functionally, catalyzes the conversion of N-acetyl-diaminopimelate to diaminopimelate and acetate. The polypeptide is N-acetyldiaminopimelate deacetylase (Listeria monocytogenes serovar 1/2a (strain ATCC BAA-679 / EGD-e)).